The sequence spans 344 residues: Meiotic recombination protein DMC1 homolog (344 aa).

Residues 1-22 (MMASLKAEETSQMQLVEREEND) are disordered. ATP is bound at residue 133–140 (GEFRSGKT). Arg235 provides a ligand contact to dsDNA. SsDNA is bound by residues Arg235, Phe238, Arg241, Arg247, and Arg315. The dsDNA site is built by Arg241 and Arg247.

The protein belongs to the RecA family. DMC1 subfamily. In terms of assembly, double stacked ring-shaped homooctamer. Interacts with BRCA2A and BRCA2B. As to expression, expressed in mitotic and/or meiotic tissues. Expressed in roots, leaves and anthers and carpels of young fower buds.

Its subcellular location is the nucleus. In terms of biological role, may participate in meiotic recombination, specifically in homologous strand assimilation, which is required for the resolution of meiotic double-strand breaks. Mediates interhomolog recombination during meiosis. This chain is Meiotic recombination protein DMC1 homolog, found in Arabidopsis thaliana (Mouse-ear cress).